The following is a 396-amino-acid chain: Ornithine aminotransferase 2 (396 aa).

At Lys255 the chain carries N6-(pyridoxal phosphate)lysine.

The protein belongs to the class-III pyridoxal-phosphate-dependent aminotransferase family. OAT subfamily. Pyridoxal 5'-phosphate serves as cofactor.

The protein localises to the cytoplasm. The catalysed reaction is a 2-oxocarboxylate + L-ornithine = L-glutamate 5-semialdehyde + an L-alpha-amino acid. It functions in the pathway amino-acid biosynthesis; L-proline biosynthesis; L-glutamate 5-semialdehyde from L-ornithine: step 1/1. In terms of biological role, catalyzes the interconversion of ornithine to glutamate semialdehyde. The protein is Ornithine aminotransferase 2 of Staphylococcus saprophyticus subsp. saprophyticus (strain ATCC 15305 / DSM 20229 / NCIMB 8711 / NCTC 7292 / S-41).